Consider the following 447-residue polypeptide: Ribulose bisphosphate carboxylase large chain (447 aa).

Positions 89 and 139 each coordinate substrate. The active-site Proton acceptor is the K141. K143 contributes to the substrate binding site. Residues K167, D169, and E170 each coordinate Mg(2+). At K167 the chain carries N6-carboxylysine. H260 (proton acceptor) is an active-site residue. Positions 261, 293, and 345 each coordinate substrate.

This sequence belongs to the RuBisCO large chain family. Type I subfamily. As to quaternary structure, heterohexadecamer of 8 large chains and 8 small chains; disulfide-linked. The disulfide link is formed within the large subunit homodimers. The cofactor is Mg(2+). The disulfide bond which can form in the large chain dimeric partners within the hexadecamer appears to be associated with oxidative stress and protein turnover.

Its subcellular location is the plastid. The protein localises to the chloroplast. The enzyme catalyses 2 (2R)-3-phosphoglycerate + 2 H(+) = D-ribulose 1,5-bisphosphate + CO2 + H2O. It carries out the reaction D-ribulose 1,5-bisphosphate + O2 = 2-phosphoglycolate + (2R)-3-phosphoglycerate + 2 H(+). Functionally, ruBisCO catalyzes two reactions: the carboxylation of D-ribulose 1,5-bisphosphate, the primary event in carbon dioxide fixation, as well as the oxidative fragmentation of the pentose substrate in the photorespiration process. Both reactions occur simultaneously and in competition at the same active site. This is Ribulose bisphosphate carboxylase large chain from Convolvulus tricolor (Dwarf morning glory).